A 729-amino-acid polypeptide reads, in one-letter code: Cellulose synthase-like protein E1 (729 aa).

2 consecutive transmembrane segments (helical) span residues 29-49 and 64-84; these read VIAYRFFSASVFVCICLIWFY and LIWFVMFIVEIWFGLYWVVTQ. Residues Asp-152 and Asp-443 contribute to the active site. The next 5 helical transmembrane spans lie at 526–546, 553–573, 644–664, 680–700, and 709–729; these read LPVLIYSVLTSLCLFKGIPLF, WFIPFGYVTVAATAYSLAEFL, MFLVLGTLGMLNLFCFAAAVA, QFVITGVLVVINWPLYKGMLL, and MSVTVKSVVLALSACTCLAFL.

It belongs to the glycosyltransferase 2 family. Plant cellulose synthase-like E subfamily.

The protein localises to the golgi apparatus membrane. Thought to be a Golgi-localized beta-glycan synthase that polymerize the backbones of noncellulosic polysaccharides (hemicelluloses) of plant cell wall. The protein is Cellulose synthase-like protein E1 (CSLE1) of Arabidopsis thaliana (Mouse-ear cress).